A 127-amino-acid polypeptide reads, in one-letter code: MSNRKPYVREMTRTWWKDHPFYRFYMVREATILPLIFFTICLLVGLGSLVKGPLAWASWLDFMANPIVVALNIVALAGSLFHAQTFFSMMPQVMPIRLGGKTLDKKVVVLAQWAAVAAITLLVLVIV.

The next 3 helical transmembrane spans lie at 30–50, 67–87, and 107–127; these read ATIL…GSLV, IVVA…QTFF, and VVVL…LVIV.

The protein belongs to the FrdC family. As to quaternary structure, part of an enzyme complex containing four subunits: a flavoprotein (FrdA), an iron-sulfur protein (FrdB), and two hydrophobic anchor proteins (FrdC and FrdD).

Its subcellular location is the cell inner membrane. Functionally, anchors the catalytic components of the fumarate reductase complex to the cell membrane, binds quinones. The sequence is that of Fumarate reductase subunit C from Aliivibrio salmonicida (strain LFI1238) (Vibrio salmonicida (strain LFI1238)).